The following is a 218-amino-acid chain: Thiopurine S-methyltransferase (218 aa).

Positions 10, 45, 66, and 123 each coordinate S-adenosyl-L-methionine.

This sequence belongs to the class I-like SAM-binding methyltransferase superfamily. TPMT family.

It is found in the cytoplasm. It catalyses the reaction S-adenosyl-L-methionine + a thiopurine = S-adenosyl-L-homocysteine + a thiopurine S-methylether.. This Shewanella denitrificans (strain OS217 / ATCC BAA-1090 / DSM 15013) protein is Thiopurine S-methyltransferase.